Here is a 125-residue protein sequence, read N- to C-terminus: Small ribosomal subunit protein uS12 (125 aa).

Positions 1–23 are disordered; sequence MATVNQLVRKGRTKRTAKSSVPA. A 3-methylthioaspartic acid modification is found at D89. The tract at residues 102 to 125 is disordered; the sequence is ADTAGVDKRRQGRSKYGAKRPKKK. Over residues 111 to 125 the composition is skewed to basic residues; it reads RQGRSKYGAKRPKKK.

This sequence belongs to the universal ribosomal protein uS12 family. In terms of assembly, part of the 30S ribosomal subunit. Contacts proteins S8 and S17. May interact with IF1 in the 30S initiation complex.

Its function is as follows. With S4 and S5 plays an important role in translational accuracy. Interacts with and stabilizes bases of the 16S rRNA that are involved in tRNA selection in the A site and with the mRNA backbone. Located at the interface of the 30S and 50S subunits, it traverses the body of the 30S subunit contacting proteins on the other side and probably holding the rRNA structure together. The combined cluster of proteins S8, S12 and S17 appears to hold together the shoulder and platform of the 30S subunit. This is Small ribosomal subunit protein uS12 from Halorhodospira halophila (strain DSM 244 / SL1) (Ectothiorhodospira halophila (strain DSM 244 / SL1)).